The sequence spans 249 residues: Sesquipedalian-1 (249 aa).

The PH domain occupies 17–113 (PVDNAGFLYK…WVKALSRASF (97 aa)). Disordered stretches follow at residues 134–159 (GGMALPQPQPQSLPLPPSLPSALAPV) and 194–219 (EATFRPGPEPPPPPPRRRASAPHGPL). The segment covering 140–152 (QPQPQSLPLPPSL) has biased composition (pro residues). Residue Ser-213 is modified to Phosphoserine. Positions 223-235 (PFARLHECYGQEI) match the F&amp;H motif.

The protein belongs to the sesquipedalian family. In terms of assembly, forms homodimers and heterodimers with PHETA2. Interacts with OCRL and INPP5B. Interaction with OCRL may be important for endosomal morphology and function.

It is found in the early endosome. The protein localises to the recycling endosome. Its subcellular location is the golgi apparatus. The protein resides in the trans-Golgi network. It localises to the cytoplasmic vesicle. It is found in the clathrin-coated vesicle. Plays a role in endocytic trafficking. Required for receptor recycling from endosomes, both to the trans-Golgi network and the plasma membrane. This chain is Sesquipedalian-1, found in Homo sapiens (Human).